The sequence spans 445 residues: Xylose isomerase (445 aa).

Active-site residues include His107 and Asp110. Residues Glu238, Glu274, His277, Asp302, Asp313, Asp315, and Asp345 each contribute to the Mg(2+) site.

This sequence belongs to the xylose isomerase family. In terms of assembly, homotetramer. The cofactor is Mg(2+).

Its subcellular location is the cytoplasm. It catalyses the reaction alpha-D-xylose = alpha-D-xylulofuranose. This chain is Xylose isomerase, found in Bacillus pumilus (strain SAFR-032).